The following is a 205-amino-acid chain: Small ribosomal subunit protein uS4 (205 aa).

The segment at 18–46 (NIWGRSKSPVNRREYGPGQHGQRRKGKLS) is disordered. The S4 RNA-binding domain maps to 94 to 157 (RRLDAVVYRA…RQMTLVLEAQ (64 aa)).

This sequence belongs to the universal ribosomal protein uS4 family. Part of the 30S ribosomal subunit. Contacts protein S5. The interaction surface between S4 and S5 is involved in control of translational fidelity.

One of the primary rRNA binding proteins, it binds directly to 16S rRNA where it nucleates assembly of the body of the 30S subunit. Functionally, with S5 and S12 plays an important role in translational accuracy. The chain is Small ribosomal subunit protein uS4 from Xanthobacter autotrophicus (strain ATCC BAA-1158 / Py2).